We begin with the raw amino-acid sequence, 233 residues long: Putative glutathione peroxidase 7, chloroplastic (233 aa).

The transit peptide at 1-69 (MAFSYASFST…KSKNFSVYAR (69 aa)) directs the protein to the chloroplast. Cysteine 108 is an active-site residue.

Belongs to the glutathione peroxidase family.

It localises to the plastid. It is found in the chloroplast. The catalysed reaction is 2 glutathione + H2O2 = glutathione disulfide + 2 H2O. Functionally, may constitute a glutathione peroxidase-like protective system against oxidative stresses. The sequence is that of Putative glutathione peroxidase 7, chloroplastic (GPX7) from Arabidopsis thaliana (Mouse-ear cress).